Reading from the N-terminus, the 207-residue chain is Holliday junction resolvase RecU (207 aa).

A disordered region spans residues 1–30 (MPIRYPNGQPYSRSPKQGQAKKPLPADTYS). Mg(2+)-binding residues include threonine 87, aspartate 89, glutamate 102, and glutamine 121.

This sequence belongs to the RecU family. The cofactor is Mg(2+).

It localises to the cytoplasm. It catalyses the reaction Endonucleolytic cleavage at a junction such as a reciprocal single-stranded crossover between two homologous DNA duplexes (Holliday junction).. Its function is as follows. Endonuclease that resolves Holliday junction intermediates in genetic recombination. Cleaves mobile four-strand junctions by introducing symmetrical nicks in paired strands. Promotes annealing of linear ssDNA with homologous dsDNA. Required for DNA repair, homologous recombination and chromosome segregation. The sequence is that of Holliday junction resolvase RecU from Shouchella clausii (strain KSM-K16) (Alkalihalobacillus clausii).